A 230-amino-acid polypeptide reads, in one-letter code: Ribosomal RNA small subunit methyltransferase Nep1 (230 aa).

S-adenosyl-L-methionine contacts are provided by residues Gly184, Gly189, and 205–210; that span reads IYNKPL.

The protein belongs to the class IV-like SAM-binding methyltransferase superfamily. RNA methyltransferase NEP1 family. As to quaternary structure, homodimer.

It carries out the reaction a pseudouridine in rRNA + S-adenosyl-L-methionine = an N(1)-methylpseudouridine in rRNA + S-adenosyl-L-homocysteine + H(+). Functionally, methyltransferase involved in ribosomal biogenesis. Specifically catalyzes the N1-methylation of the pseudouridine corresponding to position 914 in M.jannaschii 16S rRNA. The polypeptide is Ribosomal RNA small subunit methyltransferase Nep1 (Staphylothermus marinus (strain ATCC 43588 / DSM 3639 / JCM 9404 / F1)).